The following is a 302-amino-acid chain: Acetylglutamate kinase (302 aa).

Residues 68–69 (GG), R90, and N194 each bind substrate.

Belongs to the acetylglutamate kinase family. ArgB subfamily.

Its subcellular location is the cytoplasm. The enzyme catalyses N-acetyl-L-glutamate + ATP = N-acetyl-L-glutamyl 5-phosphate + ADP. It participates in amino-acid biosynthesis; L-arginine biosynthesis; N(2)-acetyl-L-ornithine from L-glutamate: step 2/4. Its function is as follows. Catalyzes the ATP-dependent phosphorylation of N-acetyl-L-glutamate. The polypeptide is Acetylglutamate kinase (Acinetobacter baumannii (strain AB307-0294)).